Reading from the N-terminus, the 247-residue chain is 1-(5-phosphoribosyl)-5-[(5-phosphoribosylamino)methylideneamino] imidazole-4-carboxamide isomerase 2 (247 aa).

Catalysis depends on E8, which acts as the Proton acceptor. The Proton donor role is filled by D128.

Belongs to the HisA/HisF family.

It is found in the cytoplasm. The catalysed reaction is 1-(5-phospho-beta-D-ribosyl)-5-[(5-phospho-beta-D-ribosylamino)methylideneamino]imidazole-4-carboxamide = 5-[(5-phospho-1-deoxy-D-ribulos-1-ylimino)methylamino]-1-(5-phospho-beta-D-ribosyl)imidazole-4-carboxamide. Its pathway is amino-acid biosynthesis; L-histidine biosynthesis; L-histidine from 5-phospho-alpha-D-ribose 1-diphosphate: step 4/9. This Ruegeria pomeroyi (strain ATCC 700808 / DSM 15171 / DSS-3) (Silicibacter pomeroyi) protein is 1-(5-phosphoribosyl)-5-[(5-phosphoribosylamino)methylideneamino] imidazole-4-carboxamide isomerase 2.